A 183-amino-acid polypeptide reads, in one-letter code: UPF0316 protein BcerKBAB4_3093 (183 aa).

The next 3 helical transmembrane spans lie at L6–V26, S32–F52, and W58–I78.

This sequence belongs to the UPF0316 family.

Its subcellular location is the cell membrane. This chain is UPF0316 protein BcerKBAB4_3093, found in Bacillus mycoides (strain KBAB4) (Bacillus weihenstephanensis).